Consider the following 165-residue polypeptide: Small ribosomal subunit protein uS5 (165 aa).

The 64-residue stretch at leucine 13–valine 76 folds into the S5 DRBM domain.

This sequence belongs to the universal ribosomal protein uS5 family. Part of the 30S ribosomal subunit. Contacts proteins S4 and S8.

With S4 and S12 plays an important role in translational accuracy. In terms of biological role, located at the back of the 30S subunit body where it stabilizes the conformation of the head with respect to the body. This is Small ribosomal subunit protein uS5 from Oenococcus oeni (strain ATCC BAA-331 / PSU-1).